A 73-amino-acid chain; its full sequence is Putative antitoxin VapB9 (73 aa).

In terms of biological role, antitoxin component of a possible type II toxin-antitoxin (TA) system. The cognate toxin is VapC9. The chain is Putative antitoxin VapB9 (vapB9) from Mycobacterium tuberculosis (strain CDC 1551 / Oshkosh).